We begin with the raw amino-acid sequence, 387 residues long: S-adenosylmethionine synthase (387 aa).

H15 contributes to the ATP binding site. D17 provides a ligand contact to Mg(2+). A K(+)-binding site is contributed by E43. The L-methionine site is built by E56 and Q99. A flexible loop region spans residues 99–109 (QSPDIAQGVNR). Residues 166 to 168 (DAK), 232 to 233 (RF), D241, 247 to 248 (RK), A264, and K268 contribute to the ATP site. Residue D241 coordinates L-methionine. Residue K272 participates in L-methionine binding.

The protein belongs to the AdoMet synthase family. In terms of assembly, homotetramer; dimer of dimers. Mg(2+) is required as a cofactor. Requires K(+) as cofactor.

Its subcellular location is the cytoplasm. It carries out the reaction L-methionine + ATP + H2O = S-adenosyl-L-methionine + phosphate + diphosphate. It participates in amino-acid biosynthesis; S-adenosyl-L-methionine biosynthesis; S-adenosyl-L-methionine from L-methionine: step 1/1. Its function is as follows. Catalyzes the formation of S-adenosylmethionine (AdoMet) from methionine and ATP. The overall synthetic reaction is composed of two sequential steps, AdoMet formation and the subsequent tripolyphosphate hydrolysis which occurs prior to release of AdoMet from the enzyme. The chain is S-adenosylmethionine synthase from Nitrosomonas europaea (strain ATCC 19718 / CIP 103999 / KCTC 2705 / NBRC 14298).